Consider the following 890-residue polypeptide: UPF0182 protein SYNW1212 (890 aa).

8 helical membrane passes run 21-41 (WLLQLASAVVALLPIGLAIRW), 64-84 (LTLLLAIALQLVSLAVINGLI), 98-118 (WQVSIHQSQLPVLTLISLVAV), 134-154 (AVVLIAARAWGVWALAWSIPL), 173-193 (FAALQLLIALLSSGALFCLGN), 219-239 (RLLMLMAALVLVLLAGQCWLS), 268-288 (LLTVELLLLALAVMLPSSLLL), and 295-315 (VLAVTLALGFSLTPLSRWLIL).

Belongs to the UPF0182 family.

It localises to the cell membrane. The chain is UPF0182 protein SYNW1212 from Parasynechococcus marenigrum (strain WH8102).